The primary structure comprises 336 residues: DNA repair protein XRCC4 (336 aa).

The segment at 1–213 (MERKISRIHL…EREKDIKQEG (213 aa)) is interaction with IFFO1. Ser-53 carries the phosphoserine; by PRKDC modification. Coiled coils occupy residues 131–165 (LDTI…FEKC) and 184–212 (LNEK…IKQE). The tract at residues 180-213 (FILVLNEKKTKIRSLHNKLLNAAQEREKDIKQEG) is interaction with LIG4. The residue at position 193 (Ser-193) is a Phosphoserine; by PRKDC. Lys-210 is covalently cross-linked (Glycyl lysine isopeptide (Lys-Gly) (interchain with G-Cter in SUMO)). A disordered region spans residues 212–249 (EGETAICSEMTADRDPVYDESTDEESENQTDLSGLASA). Tyr-229 carries the phosphotyrosine modification. Positions 229–239 (YDESTDEESEN) are enriched in acidic residues. The residue at position 232 (Ser-232) is a Phosphoserine. At Thr-233 the chain carries Phosphothreonine; by CK2. Phosphoserine occurs at positions 237 and 256. Ser-260 bears the Phosphoserine; by PRKDC mark. The interval 264 to 336 (TDIAPSRKRR…SSPEDLFDEI (73 aa)) is disordered. The Nuclear localization signal motif lies at 270 to 275 (RKRRQR). Lys-296 is covalently cross-linked (Glycyl lysine isopeptide (Lys-Gly) (interchain with G-Cter in ubiquitin)). Residues Ser-303, Ser-304, Ser-315, and Ser-320 each carry the phosphoserine; by PRKDC modification. The segment covering 317–329 (ENMSLETLRNSSP) has biased composition (polar residues). Thr-323 carries the phosphothreonine; by PRKDC modification. A phosphoserine; by PRKDC mark is found at Ser-327 and Ser-328.

The protein belongs to the XRCC4-XLF family. XRCC4 subfamily. Homodimer and homotetramer in solution. Interacts with NHEJ1/XLF; the interaction is direct and is mediated via a head-to-head interaction between N-terminal head regions. Interacts with LIG4; the LIG4-XRCC4 subcomplex has a 1:2 stoichiometry and XRCC4 is required for LIG4 stability. Component of the core long-range non-homologous end joining (NHEJ) complex (also named DNA-PK complex) composed of PRKDC, LIG4, XRCC4, XRCC6/Ku70, XRCC5/Ku86 and NHEJ1/XLF. Additional component of the NHEJ complex includes PAXX. Following autophosphorylation, PRKDC dissociates from DNA, leading to formation of the short-range NHEJ complex, composed of LIG4, XRCC4, XRCC6/Ku70, XRCC5/Ku86 and NHEJ1/XLF. Interacts with PRKDC; the interaction is direct. Interacts with XRCC6/Ku70; the interaction is direct. Interacts with APTX and APLF. Forms a heterotetramer with IFFO1; the interaction involves LIG4-free XRCC4 and leads to the relocalization of IFFO1 to the sites of DNA damage. Interacts with PNKP; mainly interacts with PNKP when phosphorylated at Thr-233, but is also able to interact at much lower level with PNKP when not unphosphorylated. Interacts with POLL (DNA polymerase lambda). As to quaternary structure, interacts with XKR4; interacts with the processed form of XKR4, which is cleaved by caspase. Phosphorylated by PRKDC at the C-terminus in response to DNA damage; Ser-260 and Ser-320 constitute the main phosphorylation sites. Phosphorylations by PRKDC at the C-terminus of XRCC4 and NHEJ1/XLF are highly redundant and regulate ability of the XRCC4-NHEJ1/XLF subcomplex to bridge DNA. Phosphorylation by PRKDC does not prevent interaction with NHEJ1/XLF but disrupts ability to bridge DNA and promotes detachment from DNA. Phosphorylation at Ser-327 and Ser-328 by PRKDC promotes recognition by the SCF(FBXW7) complex and subsequent ubiquitination via 'Lys-63'-linked ubiquitin. Phosphorylation at Thr-233 by CK2 promotes interaction with PNKP; regulating PNKP activity and localization to DNA damage sites. Phosphorylation by CK2 promotes interaction with APTX. Post-translationally, ubiquitinated at Lys-296 by the SCF(FBXW7) complex via 'Lys-63'-linked ubiquitination, thereby promoting double-strand break repair: the SCF(FBXW7) complex specifically recognizes XRCC4 when phosphorylated at Ser-327 and Ser-328 by PRKDC, and 'Lys-63'-linked ubiquitination facilitates DNA non-homologous end joining (NHEJ) by enhancing association with XRCC5/Ku80 and XRCC6/Ku70. Monoubiquitinated. In terms of processing, undergoes proteolytic processing by caspase-3 (CASP3). This generates the protein XRCC4, C-terminus (XRCC4/C), which translocates to the cytoplasm and activates phospholipid scramblase activity of XKR4, thereby promoting phosphatidylserine exposure on apoptotic cell surface. As to expression, widely expressed.

It is found in the nucleus. The protein resides in the chromosome. The protein localises to the cytoplasm. DNA non-homologous end joining (NHEJ) core factor, required for double-strand break repair and V(D)J recombination. Acts as a scaffold protein that regulates recruitment of other proteins to DNA double-strand breaks (DSBs). Associates with NHEJ1/XLF to form alternating helical filaments that bridge DNA and act like a bandage, holding together the broken DNA until it is repaired. The XRCC4-NHEJ1/XLF subcomplex binds to the DNA fragments of a DSB in a highly diffusive manner and robustly bridges two independent DNA molecules, holding the broken DNA fragments in close proximity to one other. The mobility of the bridges ensures that the ends remain accessible for further processing by other repair factors. Plays a key role in the NHEJ ligation step of the broken DNA during DSB repair via direct interaction with DNA ligase IV (LIG4): the LIG4-XRCC4 subcomplex reseals the DNA breaks after the gap filling is completed. XRCC4 stabilizes LIG4, regulates its subcellular localization and enhances LIG4's joining activity. Binding of the LIG4-XRCC4 subcomplex to DNA ends is dependent on the assembly of the DNA-dependent protein kinase complex DNA-PK to these DNA ends. Promotes displacement of PNKP from processed strand break termini. Its function is as follows. Acts as an activator of the phospholipid scramblase activity of XKR4. This form, which is generated upon caspase-3 (CASP3) cleavage, translocates into the cytoplasm and interacts with XKR4, thereby promoting phosphatidylserine scramblase activity of XKR4 and leading to phosphatidylserine exposure on apoptotic cell surface. This chain is DNA repair protein XRCC4, found in Homo sapiens (Human).